A 184-amino-acid chain; its full sequence is MQKTKLRLIFMIIYKEIAKLNKTFPLLNEEKILLGTDGSVTNILEILFEGECRVETINQKIVANTNYREVILKVNNIPLVYAVSKTPFKNIEEENLREEIKRDLLSADIPIGKIIRKHNLETRREIKYIGIAEIDDYLKSLLKTNYSRLPKRTYNIIYKNKVLMEITEIFAVRGKLVKNTYSID.

Belongs to the chorismate pyruvate-lyase type 2 family.

In Methanocaldococcus jannaschii (strain ATCC 43067 / DSM 2661 / JAL-1 / JCM 10045 / NBRC 100440) (Methanococcus jannaschii), this protein is Putative lyase MJ0807.